Here is a 350-residue protein sequence, read N- to C-terminus: Cobalt-precorrin-5B C(1)-methyltransferase (350 aa).

This sequence belongs to the CbiD family.

It carries out the reaction Co-precorrin-5B + S-adenosyl-L-methionine = Co-precorrin-6A + S-adenosyl-L-homocysteine. It functions in the pathway cofactor biosynthesis; adenosylcobalamin biosynthesis; cob(II)yrinate a,c-diamide from sirohydrochlorin (anaerobic route): step 6/10. Its function is as follows. Catalyzes the methylation of C-1 in cobalt-precorrin-5B to form cobalt-precorrin-6A. The protein is Cobalt-precorrin-5B C(1)-methyltransferase of Syntrophotalea carbinolica (strain DSM 2380 / NBRC 103641 / GraBd1) (Pelobacter carbinolicus).